Reading from the N-terminus, the 357-residue chain is Acyl-coenzyme A diphosphatase NUDT19 (357 aa).

The region spanning 10–242 (AATVMLAAGW…IWLAPPQFYE (233 aa)) is the Nudix hydrolase domain. The Nudix box signature appears at 97 to 118 (AALPDDVALRICAIRETFEEAG). The Mg(2+) site is built by glutamate 112 and glutamate 116. The residue at position 300 (lysine 300) is an N6-succinyllysine. The short motif at 355–357 (ARL) is the Microbody targeting signal element.

It belongs to the Nudix hydrolase family. As to quaternary structure, monomer. The cofactor is Mg(2+). Mn(2+) serves as cofactor.

It is found in the peroxisome. It carries out the reaction an acyl-CoA + H2O = an acyl-4'-phosphopantetheine + adenosine 3',5'-bisphosphate + 2 H(+). The catalysed reaction is CoA + H2O = (R)-4'-phosphopantetheine + adenosine 3',5'-bisphosphate + 2 H(+). The enzyme catalyses hexanoyl-CoA + H2O = hexanoyl-4'-phosphopantetheine + adenosine 3',5'-bisphosphate + 2 H(+). It catalyses the reaction octanoyl-CoA + H2O = S-octanoyl-4'-phosphopantetheine + adenosine 3',5'-bisphosphate + 2 H(+). It carries out the reaction butanoyl-CoA + H2O = S-butanoyl-4'-phosphopantetheine + adenosine 3',5'-bisphosphate + 2 H(+). The catalysed reaction is propanoyl-CoA + H2O = propanoyl-4'-phosphopantetheine + adenosine 3',5'-bisphosphate + 2 H(+). The enzyme catalyses malonyl-CoA + H2O = malonyl-4'-phosphopantetheine + adenosine 3',5'-bisphosphate + 2 H(+). It catalyses the reaction succinyl-CoA + H2O = succinyl-4'-phosphopantetheine + adenosine 3',5'-bisphosphate + 2 H(+). It carries out the reaction choloyl-CoA + H2O = S-choloyl-4'-phosphopantetheine + adenosine 3',5'-bisphosphate + 2 H(+). The catalysed reaction is 4,8-dimethylnonanoyl-CoA + H2O = S-(4,8-dimethylnonanoyl)-4'-phosphopantetheine + adenosine 3',5'-bisphosphate + 2 H(+). The enzyme catalyses (9Z,12Z,15Z)-octadecatrienoyl-CoA + H2O = S-(9Z,12Z,15Z-octadecatrienoyl)-4'-phosphopantetheine + adenosine 3',5'-bisphosphate + 2 H(+). It catalyses the reaction (9Z,12Z)-octadecadienoyl-CoA + H2O = S-(9Z,12Z-octadecadienoyl)-4'-phosphopantetheine + adenosine 3',5'-bisphosphate + 2 H(+). It carries out the reaction (9Z)-hexadecenoyl-CoA + H2O = S-(9Z-hexadecenoyl)-4'-phosphopantetheine + adenosine 3',5'-bisphosphate + 2 H(+). The catalysed reaction is (9Z)-tetradecenoyl-CoA + H2O = S-(9Z-tetradecenoyl)-4'-phosphopantetheine + adenosine 3',5'-bisphosphate + 2 H(+). The enzyme catalyses (6Z)-octenoyl-CoA + H2O = S-(6Z-octenoyl)-4'-phosphopantetheine + adenosine 3',5'-bisphosphate + 2 H(+). It catalyses the reaction hexadecanoyl-CoA + H2O = S-hexadecanoyl-4'-phosphopantetheine + adenosine 3',5'-bisphosphate + 2 H(+). It carries out the reaction tetradecanoyl-CoA + H2O = tetradecanoyl-4'-phosphopantetheine + adenosine 3',5'-bisphosphate + 2 H(+). The catalysed reaction is dodecanoyl-CoA + H2O = S-dodecanoyl-4'-phosphopantetheine + adenosine 3',5'-bisphosphate + 2 H(+). The enzyme catalyses a 5'-end CoA-ribonucleoside in mRNA + H2O = a 5'-end phospho-adenosine-phospho-ribonucleoside in mRNA + (R)-4'-phosphopantetheine + 2 H(+). Its function is as follows. Fatty acyl-coenzyme A (CoA) diphosphatase that hydrolyzes fatty acyl-CoA to yield acyl-4'-phosphopantetheine and adenosine 3',5'-bisphosphate. Mediates the hydrolysis of a wide range of CoA esters, including choloyl-CoA and branched-chain fatty-acyl-CoA esters and at low substrate concentrations medium and long-chain fatty-acyl-CoA esters are the primary substrates. Highest activity seen with medium-chain acyl-CoA esters and higher rates of activity seen with the unsaturated acyl-CoA esters compared with the saturated esters. Exhibits decapping activity towards dpCoA-capped RNAs in vitro. The chain is Acyl-coenzyme A diphosphatase NUDT19 (Nudt19) from Rattus norvegicus (Rat).